The sequence spans 89 residues: Putative membrane protein insertion efficiency factor (89 aa).

The interval 68–89 (VPPPNSDARNAPHEAEASSHRL) is disordered. Basic and acidic residues predominate over residues 77 to 89 (NAPHEAEASSHRL).

Belongs to the UPF0161 family.

The protein resides in the cell inner membrane. In terms of biological role, could be involved in insertion of integral membrane proteins into the membrane. The sequence is that of Putative membrane protein insertion efficiency factor from Burkholderia thailandensis (strain ATCC 700388 / DSM 13276 / CCUG 48851 / CIP 106301 / E264).